The following is a 241-amino-acid chain: ATP synthase subunit a (241 aa).

A run of 5 helical transmembrane segments spans residues 23–43 (VSFT…AAFF), 83–103 (YFPY…LGML), 113–133 (IAVT…IGFA), 188–208 (VLAG…FAVV), and 209–229 (LGVT…FTIL).

It belongs to the ATPase A chain family. In terms of assembly, F-type ATPases have 2 components, CF(1) - the catalytic core - and CF(0) - the membrane proton channel. CF(1) has five subunits: alpha(3), beta(3), gamma(1), delta(1), epsilon(1). CF(0) has four main subunits: a, b, b' and c.

The protein resides in the cell inner membrane. Key component of the proton channel; it plays a direct role in the translocation of protons across the membrane. This is ATP synthase subunit a from Rhodospirillum rubrum (strain ATCC 11170 / ATH 1.1.1 / DSM 467 / LMG 4362 / NCIMB 8255 / S1).